We begin with the raw amino-acid sequence, 326 residues long: MRVLIVKTSSMGDVLHTLPALTDAQQAIPGIKFDWVVEEGFAQIPSWHAAVERVIPVAIRRWRKAWFSAPIKAERKAFREALQAKNYDAVIDAQGLVKSAALVTRLAHGVKHGMDWQTAREPLASLFYNRKHHIAKQQHAVERTRELFAKSLGYSKPQTQGDYAIAQHFLTNLPTDAGEYAVFLHATTRDDKHWPEEHWRELIGLLADSGIRIKLPWGAPHEEERAKRLAEGFAYVEVLPKMSLEGVARVLAGAKFVVSVDTGLSHLTAALDRPNITVYGPTDPGLIGGYGKNQMVCRAPGNELSQLTANAVKQFIEENAEKAAMI.

Positions 187, 188, 192, 222, and 242 each coordinate ADP. The ADP-L-glycero-beta-D-manno-heptose site is built by T187, T188, K192, E222, M242, D261, T262, G263, and H266. Residues T262 and G263 each contribute to the ADP site.

This sequence belongs to the glycosyltransferase 9 family. Monomer.

The protein localises to the cell inner membrane. It catalyses the reaction an alpha-Kdo-(2-&gt;4)-alpha-Kdo-(2-&gt;6)-lipid A + ADP-L-glycero-beta-D-manno-heptose = an L-alpha-D-Hep-(1-&gt;5)-[alpha-Kdo-(2-&gt;4)]-alpha-Kdo-(2-&gt;6)-lipid A + ADP + H(+). The enzyme catalyses alpha-Kdo-(2-&gt;4)-alpha-Kdo-(2-&gt;6)-lipid A (E. coli) + ADP-L-glycero-beta-D-manno-heptose = L-alpha-D-Hep-(1-&gt;5)-[alpha-Kdo-(2-&gt;4)]-alpha-Kdo-(2-&gt;6)-lipid A (E. coli) + ADP + H(+). The protein operates within bacterial outer membrane biogenesis; LPS core biosynthesis. Its activity is regulated as follows. Inhibited by ADP-L-glycero-beta-D-gluco-2-deoxy-2-fluoro-heptose (ADP-2F-heptose), a non-cleavable analog of the substrate ADP-L-glycero-beta-D-manno-heptose. Functionally, glycosyltransferase involved in the biosynthesis of the core oligosaccharide region of lipopolysaccharide (LPS). Catalyzes the addition of the first heptose unit to one 3-deoxy-D-manno-octulosonic acid (Kdo) residue of the Kdo2-lipid A module. The polypeptide is Lipopolysaccharide heptosyltransferase 1 (Escherichia coli O18:K1:H7 (strain RS218 / NMEC)).